The chain runs to 384 residues: Deoxyguanosinetriphosphate triphosphohydrolase-like protein (384 aa).

The tract at residues 13-42 (LASYASDPSKTRGRRHSEPPPENRTEFQRD) is disordered. Residues 28–42 (HSEPPPENRTEFQRD) show a composition bias toward basic and acidic residues. In terms of domain architecture, HD spans 73-208 (RLTHSLEVAQ…ANLADEVAYN (136 aa)).

The protein belongs to the dGTPase family. Type 2 subfamily.

In Bordetella bronchiseptica (strain ATCC BAA-588 / NCTC 13252 / RB50) (Alcaligenes bronchisepticus), this protein is Deoxyguanosinetriphosphate triphosphohydrolase-like protein.